Consider the following 111-residue polypeptide: 2Fe-2S ferredoxin (111 aa).

The 2Fe-2S ferredoxin-type domain occupies 2–104 (PKIVILPHQD…DLVVEIPRYT (103 aa)). 4 residues coordinate [2Fe-2S] cluster: cysteine 42, cysteine 48, cysteine 51, and cysteine 87.

The protein belongs to the adrenodoxin/putidaredoxin family. [2Fe-2S] cluster is required as a cofactor.

Functionally, ferredoxin are iron-sulfur proteins that transfer electrons in a wide variety of metabolic reactions. Although the function of this ferredoxin is unknown it is probable that it has a role as a cellular electron transfer protein. Involved in the in vivo assembly of the Fe-S clusters in a wide variety of iron-sulfur proteins. This Escherichia coli O157:H7 protein is 2Fe-2S ferredoxin (fdx).